Consider the following 176-residue polypeptide: NAD(P)H-quinone oxidoreductase subunit J (176 aa).

The protein belongs to the complex I 30 kDa subunit family. NDH-1 can be composed of about 15 different subunits; different subcomplexes with different compositions have been identified which probably have different functions.

It localises to the cellular thylakoid membrane. The catalysed reaction is a plastoquinone + NADH + (n+1) H(+)(in) = a plastoquinol + NAD(+) + n H(+)(out). It catalyses the reaction a plastoquinone + NADPH + (n+1) H(+)(in) = a plastoquinol + NADP(+) + n H(+)(out). Functionally, NDH-1 shuttles electrons from an unknown electron donor, via FMN and iron-sulfur (Fe-S) centers, to quinones in the respiratory and/or the photosynthetic chain. The immediate electron acceptor for the enzyme in this species is believed to be plastoquinone. Couples the redox reaction to proton translocation, and thus conserves the redox energy in a proton gradient. Cyanobacterial NDH-1 also plays a role in inorganic carbon-concentration. This chain is NAD(P)H-quinone oxidoreductase subunit J, found in Prochlorococcus marinus (strain MIT 9515).